A 583-amino-acid chain; its full sequence is Probable lysosomal cobalamin transporter (583 aa).

A run of 10 helical transmembrane segments spans residues 8–28, 41–61, 95–115, 145–165, 188–208, 312–332, 347–367, 375–395, 418–438, and 506–526; these read LIWAVYAIVVAILAAVASVFI, VILTCIVAVTTLLATVLLVPV, IVYYFLYSLDALLCLIVIPFI, TVSFLAIVVVLFLVGFFVPVA, ALTFALGLLITIGLCLYVLYT, LLSGVIFSLLALIIWISMLLT, GYILGHINVFNPINWVFVQSA, VIFTLLVLFLFSSSIVGISAV, LLATAMLMLIILALNYSTSMI, and FFGAIFFWAQFAFLGIYLLVM. Residues 541 to 552 show a composition bias toward acidic residues; the sequence is LDEDAEEAEEES. The segment at 541–562 is disordered; the sequence is LDEDAEEAEEESLLANTRGRAE.

Belongs to the LIMR family. LMBRD1 subfamily.

The protein resides in the lysosome membrane. In terms of biological role, probable lysosomal cobalamin transporter. Required to export cobalamin from lysosomes allowing its conversion to cofactors. The chain is Probable lysosomal cobalamin transporter from Aspergillus oryzae (strain ATCC 42149 / RIB 40) (Yellow koji mold).